The chain runs to 123 residues: Fluoride-specific ion channel FluC 2 (123 aa).

4 helical membrane-spanning segments follow: residues 3 to 23 (LDGF…RMFI), 38 to 58 (ILIV…LNIT), 62 to 82 (LILF…SFIY), and 94 to 114 (LILL…FCLG). Positions 72 and 75 each coordinate Na(+).

The protein belongs to the fluoride channel Fluc/FEX (TC 1.A.43) family.

It is found in the cell inner membrane. The catalysed reaction is fluoride(in) = fluoride(out). Its activity is regulated as follows. Na(+) is not transported, but it plays an essential structural role and its presence is essential for fluoride channel function. In terms of biological role, fluoride-specific ion channel. Important for reducing fluoride concentration in the cell, thus reducing its toxicity. The sequence is that of Fluoride-specific ion channel FluC 2 from Prochlorococcus marinus subsp. pastoris (strain CCMP1986 / NIES-2087 / MED4).